The chain runs to 826 residues: Hyaluronate lyase HylA (826 aa).

A signal peptide (tat-type signal) is located at residues 1–36 (MFDIPYQVPSRRTFLSLSALSAIAIAASPEMPDAFA). Residues histidine 276, tyrosine 285, and arginine 339 contribute to the active site. A disordered region spans residues 800 to 826 (LSPALPKPTKPSLRASSYPLGLPHTSS).

The protein belongs to the polysaccharide lyase 8 family. Predicted to be exported by the Tat system. The position of the signal peptide cleavage has not been experimentally proven.

It is found in the secreted. The enzyme catalyses [hyaluronan](n) = n 3-(4-deoxy-beta-D-gluc-4-enuronosyl)-N-acetyl-D-glucosamine + H2O. Functionally, degrades hyaluronic acid (HA) into large-sized HA oligosaccharides, including tetrasaccharide HA (HA-4), hexasaccharide HA (HA-6) and higher molecular weight HA, and to a lesser extent into HA disaccharides (HA-2). Involved in the pathogenesis of acne. HA degradation products induce secretion of proinflammatory cytokines (IL-6, IL-8 and TNF-alpha) from human HaCaT keratinocyte cell line and from mouse bone marrow derived macrophages (BMDMs). Produced HA fragments also direct robust TLR2-dependent inflammation in the mouse model of acne. The polypeptide is Hyaluronate lyase HylA (Cutibacterium acnes (Propionibacterium acnes)).